Consider the following 438-residue polypeptide: DEAD-box ATP-dependent RNA helicase 58, chloroplastic (438 aa).

The transit peptide at 1 to 44 (MAAFSGCASPLSTTLRSGLAPFTLRHRLRLRRLRASAATLREVC) directs the protein to the chloroplast. The Q motif signature appears at 41 to 69 (REVCAGRVPEHVLQRAEEVGYVVPTEVQE). Residues 72–245 (LPVLLSGQDC…DCVQHKWTKT (174 aa)) enclose the Helicase ATP-binding domain. Position 85 to 92 (85 to 92 (AQTGSGKT)) interacts with ATP. The DEAD box motif lies at 190–193 (DEVD). A Helicase C-terminal domain is found at 274 to 436 (RLHVLLSLLE…ELPVESMFAF (163 aa)).

It belongs to the DEAD box helicase family.

Its subcellular location is the plastid. The protein localises to the chloroplast. It catalyses the reaction ATP + H2O = ADP + phosphate + H(+). This chain is DEAD-box ATP-dependent RNA helicase 58, chloroplastic, found in Oryza sativa subsp. japonica (Rice).